A 353-amino-acid chain; its full sequence is MAKDKFVRTVLGDVPAESIGITDCHDHLIKNGGPEMHEHPDFLMIDVEAAKKEVQEYVDHGGKTIVTMDPPNVGRDVYRMLEIAEAFKGKANIVMSTGFHKAAFYDKYSSWLACVPTDDIVKMMVAEVEEGMDEYNYNGPVVKRSKAKAGIIKAGTGYAAIDRLELKALEVAARTSITTGCPILVHTQLGTMALEVAQHLIGFGANPRKIQLSHLNKNPDRYYYEKIIKETGVTICFDGPDRVKYYPDSLLADHIKYLVDKGLQKHITLSLDAGRILYQRNYGLTKGKETFGLSYLFERFIPLLKQVGVSQEAIDDILINNPREILAFDEPRVYDASKVSSEVVQLKKDLKLL.

Positions 25, 27, 153, 186, and 214 each coordinate Zn(2+). Lys153 is subject to N6-carboxylysine. 244-245 provides a ligand contact to substrate; it reads KY. Asp272 serves as a coordination point for Zn(2+). 275 to 278 is a substrate binding site; the sequence is RILY.

Belongs to the metallo-dependent hydrolases superfamily. Phosphotriesterase family. It depends on Zn(2+) as a cofactor.

It catalyses the reaction a 1,4-lactone + H2O = a 4-hydroxyacid + H(+). The catalysed reaction is D-xylono-1,4-lactone 5-phosphate + H2O = 5-phospho-D-xylonate + H(+). It carries out the reaction L-arabino-1,4-lactone 5-phosphate + H2O = 5-phospho-L-arabinonate + H(+). Functionally, catalyzes the hydrolysis of D-xylono-1,4-lactone-5-phosphate and L-arabino-1,4-lactone-5-phosphate. Also able to hydrolyze carboxy 1,4-lactones. The sequence is that of Phospho-furanose lactonase from Mycoplasmopsis agalactiae (strain NCTC 10123 / CIP 59.7 / PG2) (Mycoplasma agalactiae).